Reading from the N-terminus, the 185-residue chain is Large ribosomal subunit protein uL5c (185 aa).

The protein belongs to the universal ribosomal protein uL5 family. In terms of assembly, part of the 50S ribosomal subunit; contacts the 5S rRNA.

Its subcellular location is the plastid. It localises to the chloroplast. Its function is as follows. Binds 5S rRNA, forms part of the central protuberance of the 50S subunit. This Chlorokybus atmophyticus (Soil alga) protein is Large ribosomal subunit protein uL5c (rpl5).